We begin with the raw amino-acid sequence, 178 residues long: Large ribosomal subunit protein uL6 (178 aa).

The protein belongs to the universal ribosomal protein uL6 family. As to quaternary structure, part of the 50S ribosomal subunit.

Functionally, this protein binds to the 23S rRNA, and is important in its secondary structure. It is located near the subunit interface in the base of the L7/L12 stalk, and near the tRNA binding site of the peptidyltransferase center. This chain is Large ribosomal subunit protein uL6, found in Helicobacter pylori (strain J99 / ATCC 700824) (Campylobacter pylori J99).